The chain runs to 308 residues: D-alanine--D-alanine ligase (308 aa).

The region spanning 100 to 295 is the ATP-grasp domain; the sequence is KEVFVRNGLP…FDGLIGRLIE (196 aa). 127–180 lines the ATP pocket; sequence PFAFPAFIKSNNGGSSLALHRVSCPGELARALDELFTRGGEAIIEPAVEGVEVT. Residues Asp-249, Glu-262, and Asn-264 each coordinate Mg(2+).

Belongs to the D-alanine--D-alanine ligase family. The cofactor is Mg(2+). Requires Mn(2+) as cofactor.

The protein localises to the cytoplasm. It carries out the reaction 2 D-alanine + ATP = D-alanyl-D-alanine + ADP + phosphate + H(+). It participates in cell wall biogenesis; peptidoglycan biosynthesis. Functionally, cell wall formation. The protein is D-alanine--D-alanine ligase of Oleidesulfovibrio alaskensis (strain ATCC BAA-1058 / DSM 17464 / G20) (Desulfovibrio alaskensis).